A 217-amino-acid chain; its full sequence is Very-long-chain (3R)-3-hydroxyacyl-CoA dehydratase PHS1 (217 aa).

Over 1-11 (MSKKLASPLSF) the chain is Cytoplasmic. A helical transmembrane segment spans residues 12–29 (LPLYNLLSAVGWSYLLYL). Topologically, residues 30 to 47 (VISLYPKVGQPAFFYQTK) are lumenal. A helical transmembrane segment spans residues 48 to 66 (NVATLVQCGAIIEIINSFL). Residues 67–76 (GVVRSPLLTT) lie on the Cytoplasmic side of the membrane. The helical transmembrane segment at 77–94 (VAQVSSRLLVVLGIFQLL) threads the bilayer. Over 95 to 99 (PNTSG) the chain is Lumenal. Residues 100-117 (VQSVVYISLLLAWSITEI) traverse the membrane as a helical segment. Residues 118–142 (VRYLYYFFMLVFKNGAPKILILLRY) are Cytoplasmic-facing. A helical membrane pass occupies residues 143–160 (NLFWILYPTGVASELRII). Catalysis depends on residues Tyr-149 and Glu-156. The Lumenal portion of the chain corresponds to 161 to 178 (YCALNAAESQYSLLYKRI). A helical membrane pass occupies residues 179 to 196 (LIAAMLAYIPGFPMLFLH). The Cytoplasmic segment spans residues 197 to 217 (MVAQRKKVMKSLRSSFGKKLI). The Endoplasmic reticulum retention signal signature appears at 214–217 (KKLI).

The protein belongs to the very long-chain fatty acids dehydratase HACD family.

The protein resides in the endoplasmic reticulum membrane. It is found in the vacuole membrane. It carries out the reaction a very-long-chain (3R)-3-hydroxyacyl-CoA = a very-long-chain (2E)-enoyl-CoA + H2O. The enzyme catalyses (3R)-hydroxyeicosanoyl-CoA = (2E)-eicosenoyl-CoA + H2O. It catalyses the reaction (3R)-hydroxydocosanoyl-CoA = (2E)-docosenoyl-CoA + H2O. The catalysed reaction is (3R)-hydroxyoctadecanoyl-CoA = (2E)-octadecenoyl-CoA + H2O. It carries out the reaction (3R)-hydroxytetracosanoyl-CoA = (2E)-tetracosenoyl-CoA + H2O. The enzyme catalyses (3R)-hydroxyhexacosanoyl-CoA = (2E)-hexacosenoyl-CoA + H2O. It catalyses the reaction (3R)-hydroxyhexadecanoyl-CoA = (2E)-hexadecenoyl-CoA + H2O. It functions in the pathway lipid metabolism; fatty acid biosynthesis. Functionally, catalyzes the third of the four reactions of the long-chain fatty acids elongation cycle. This endoplasmic reticulum-bound enzymatic process, allows the addition of two carbons to the chain of long- and very long-chain fatty acids/VLCFAs per cycle. This enzyme catalyzes the dehydration of the 3-hydroxyacyl-CoA intermediate into trans-2,3-enoyl-CoA, within each cycle of fatty acid elongation. Thereby, it participates in the production of VLCFAs of different chain lengths that are involved in multiple biological processes as precursors of membrane lipids and lipid mediators. The polypeptide is Very-long-chain (3R)-3-hydroxyacyl-CoA dehydratase PHS1 (PHS1) (Saccharomyces cerevisiae (strain ATCC 204508 / S288c) (Baker's yeast)).